We begin with the raw amino-acid sequence, 809 residues long: Putative zinc metalloprotease TRE2 (809 aa).

Polar residues-rich tracts occupy residues Met-1–Asn-12 and Pro-20–Met-30. Residues Met-1–Pro-66 are disordered. At Met-1 to Arg-125 the chain is on the cytoplasmic side. Positions Ser-37–Ile-50 are enriched in low complexity. Residues Phe-126–Phe-146 form a helical; Signal-anchor for type II membrane protein membrane-spanning segment. Residues Asn-147–Lys-809 are Extracellular-facing. Asn-228 is a glycosylation site (N-linked (GlcNAc...) asparagine). A PA domain is found at Ser-255–Trp-349. Residues Asn-669 and Asn-736 are each glycosylated (N-linked (GlcNAc...) asparagine).

The protein belongs to the peptidase M28 family. M28B subfamily.

The protein resides in the membrane. The polypeptide is Putative zinc metalloprotease TRE2 (TRE2) (Saccharomyces cerevisiae (strain ATCC 204508 / S288c) (Baker's yeast)).